Consider the following 290-residue polypeptide: Eukaryotic translation initiation factor 3 subunit G (290 aa).

The interval 1–34 is disordered; the sequence is MSRLGNRAADWADDEEFDDPSALPAQQVTTNKDG. Residues 210–288 form the RRM domain; the sequence is ATLRVTNVSE…LILRVEFAKR (79 aa).

It belongs to the eIF-3 subunit G family. In terms of assembly, component of the eukaryotic translation initiation factor 3 (eIF-3) complex.

It localises to the cytoplasm. Functionally, RNA-binding component of the eukaryotic translation initiation factor 3 (eIF-3) complex, which is involved in protein synthesis of a specialized repertoire of mRNAs and, together with other initiation factors, stimulates binding of mRNA and methionyl-tRNAi to the 40S ribosome. The eIF-3 complex specifically targets and initiates translation of a subset of mRNAs involved in cell proliferation. This subunit can bind 18S rRNA. This chain is Eukaryotic translation initiation factor 3 subunit G, found in Neosartorya fischeri (strain ATCC 1020 / DSM 3700 / CBS 544.65 / FGSC A1164 / JCM 1740 / NRRL 181 / WB 181) (Aspergillus fischerianus).